A 496-amino-acid polypeptide reads, in one-letter code: Apolipoprotein N-acyltransferase (496 aa).

6 helical membrane passes run 6 to 26, 50 to 70, 77 to 97, 114 to 134, 148 to 168, and 183 to 203; these read IICF…FFIP, FGYL…SIGV, FWWA…FFIS, LIFC…CTGL, ILIQ…VIYI, and LKIL…YGAM. In terms of domain architecture, CN hydrolase spans 220–464; it reads VQPSIPQTAK…QGLIPQKLTT (245 aa). The Proton acceptor role is filled by glutamate 259. Lysine 322 is an active-site residue. Cysteine 372 acts as the Nucleophile in catalysis. Residues 474 to 494 form a helical membrane-spanning segment; the sequence is FAMLLPIVFILLIHYLLSLIF.

Belongs to the CN hydrolase family. Apolipoprotein N-acyltransferase subfamily.

The protein resides in the cell inner membrane. The enzyme catalyses N-terminal S-1,2-diacyl-sn-glyceryl-L-cysteinyl-[lipoprotein] + a glycerophospholipid = N-acyl-S-1,2-diacyl-sn-glyceryl-L-cysteinyl-[lipoprotein] + a 2-acyl-sn-glycero-3-phospholipid + H(+). Its pathway is protein modification; lipoprotein biosynthesis (N-acyl transfer). Catalyzes the phospholipid dependent N-acylation of the N-terminal cysteine of apolipoprotein, the last step in lipoprotein maturation. In Rickettsia typhi (strain ATCC VR-144 / Wilmington), this protein is Apolipoprotein N-acyltransferase.